A 200-amino-acid polypeptide reads, in one-letter code: Rho-related protein racD (200 aa).

GTP is bound by residues Ala20, Gly22, Lys23, Thr24, Cys25, Tyr39, and Thr42. Residue Thr24 coordinates Mg(2+). Short sequence motifs (switch) lie at residues 33 to 44 (NEFPKDYVPTVF) and 64 to 82 (DTAG…YPNT). A Mg(2+)-binding site is contributed by Thr42. Residues Lys123, Asp125, and Ala166 each coordinate GTP. At Cys197 the chain carries Cysteine methyl ester. The S-geranylgeranyl cysteine moiety is linked to residue Cys197. Positions 198–200 (ALL) are cleaved as a propeptide — removed in mature form.

Belongs to the small GTPase superfamily. Rho family. It depends on Mg(2+) as a cofactor.

The protein resides in the cell membrane. It localises to the cytoplasm. The protein localises to the cytoskeleton. The enzyme catalyses GTP + H2O = GDP + phosphate + H(+). With respect to regulation, regulated by guanine nucleotide exchange factors (GEFs) which promote the exchange of bound GDP for free GTP, GTPase activating proteins (GAPs) which increase the GTP hydrolysis activity, and GDP dissociation inhibitors which inhibit the dissociation of the nucleotide from the GTPase. Small GTPase which cycles between active GTP-bound and inactive GDP-bound states. The sequence is that of Rho-related protein racD from Entamoeba histolytica (strain ATCC 30459 / HM-1:IMSS / ABRM).